The chain runs to 72 residues: Small, acid-soluble spore protein C (72 aa).

This sequence belongs to the alpha/beta-type SASP family.

SASP are bound to spore DNA. They are double-stranded DNA-binding proteins that cause DNA to change to an a-like conformation. They protect the DNA backbone from chemical and enzymatic cleavage and are thus involved in dormant spore's high resistance to UV light. This Bacillus subtilis (strain 168) protein is Small, acid-soluble spore protein C (sspC).